A 426-amino-acid chain; its full sequence is Tachykinins (426 aa).

A propeptide spanning residues 1 to 116 (MQCDFRVHQD…IEDNLSHEFE (116 aa)) is cleaved from the precursor. Position 127 is an arginine amide (R127). The propeptide occupies 131–145 (GYLTPDFEDSYFRDE). R156 is subject to Arginine amide. The propeptide occupies 160–167 (VVSDDDYY). R178 carries the arginine amide modification. The propeptide occupies 182–235 (SLEEVLGEIEKKAAMDYYDTRDKKTYVFEYPEDYEKRLLASIRGKLKEFPMEWE). R246 is subject to Arginine amide. Positions 250-259 (SLLDEIEELE) are excised as a propeptide. R270 is modified (arginine amide). Residues 274 to 291 (NALENYIDYYLDPDMDFD) constitute a propeptide that is removed on maturation. Positions 299 to 329 (QGMRGKKDSDKRAPMGFQGMRGKRNTGQRFD) are disordered. The residue at position 302 (R302) is an Arginine amide. A propeptide spanning residues 306 to 308 (DSD) is cleaved from the precursor. R319 bears the Arginine amide mark. Positions 323-358 (NTGQRFDTGINFNIRSSNEYQGTNNRRNALASCQLE) are excised as a propeptide. R369 and R386 each carry arginine amide. The propeptide occupies 390-426 (WATAPYEDDSPFISVFDNTERIGVDGDSPAILGNSIS).

It belongs to the tachykinin family. Tachykinins (TK) are expressed throughout the nervous system. APMGFQGMR-amide is also expressed in the retrocerebral complex (at protein level).

Its subcellular location is the secreted. Its function is as follows. Tachykinins are active peptides which excite neurons, evoke behavioral responses, are potent vasodilators and secretagogues, and contract (directly or indirectly) many smooth muscles. The chain is Tachykinins from Camponotus floridanus (Florida carpenter ant).